The following is a 496-amino-acid chain: Cytochrome P450 3A30 (496 aa).

C441 contributes to the heme binding site.

The protein belongs to the cytochrome P450 family. Requires heme as cofactor. As to expression, highly expressed in liver and intestine. Moderate expression in gill and spleen. Low expression in kidney, brain and heart.

It localises to the endoplasmic reticulum membrane. Its subcellular location is the microsome membrane. The catalysed reaction is an organic molecule + reduced [NADPH--hemoprotein reductase] + O2 = an alcohol + oxidized [NADPH--hemoprotein reductase] + H2O + H(+). In terms of biological role, putative steroid 6-beta-hydroxylase. The chain is Cytochrome P450 3A30 (cyp3a30) from Fundulus heteroclitus (Killifish).